The sequence spans 106 residues: uncharacterized protein (106 aa).

The next 2 membrane-spanning stretches (helical) occupy residues 43 to 63 and 86 to 106; these read CSTI…LAIV and IPEL…FSLF.

The protein resides in the membrane. This is an uncharacterized protein from Saccharomyces cerevisiae (strain ATCC 204508 / S288c) (Baker's yeast).